The sequence spans 216 residues: Small ribosomal subunit protein eS6 (216 aa).

The protein belongs to the eukaryotic ribosomal protein eS6 family.

The protein is Small ribosomal subunit protein eS6 of Staphylothermus marinus (strain ATCC 43588 / DSM 3639 / JCM 9404 / F1).